A 513-amino-acid chain; its full sequence is ATP synthase subunit alpha (513 aa).

An ATP-binding site is contributed by 169 to 176 (GDRQTGKT).

The protein belongs to the ATPase alpha/beta chains family. F-type ATPases have 2 components, CF(1) - the catalytic core - and CF(0) - the membrane proton channel. CF(1) has five subunits: alpha(3), beta(3), gamma(1), delta(1), epsilon(1). CF(0) has three main subunits: a(1), b(2) and c(9-12). The alpha and beta chains form an alternating ring which encloses part of the gamma chain. CF(1) is attached to CF(0) by a central stalk formed by the gamma and epsilon chains, while a peripheral stalk is formed by the delta and b chains.

The protein resides in the cell inner membrane. It carries out the reaction ATP + H2O + 4 H(+)(in) = ADP + phosphate + 5 H(+)(out). In terms of biological role, produces ATP from ADP in the presence of a proton gradient across the membrane. The alpha chain is a regulatory subunit. This Cronobacter sakazakii (strain ATCC BAA-894) (Enterobacter sakazakii) protein is ATP synthase subunit alpha.